The following is a 425-amino-acid chain: D-amino acid dehydrogenase (425 aa).

Residue 3 to 17 (VLVMGAGVIGVTTAY) participates in FAD binding.

The protein belongs to the DadA oxidoreductase family. The cofactor is FAD.

The enzyme catalyses a D-alpha-amino acid + A + H2O = a 2-oxocarboxylate + AH2 + NH4(+). It functions in the pathway amino-acid degradation; D-alanine degradation; NH(3) and pyruvate from D-alanine: step 1/1. Functionally, oxidative deamination of D-amino acids. This is D-amino acid dehydrogenase from Rhodopseudomonas palustris (strain HaA2).